The sequence spans 309 residues: Methionyl-tRNA formyltransferase (309 aa).

Residue 112–115 (SLLP) participates in (6S)-5,6,7,8-tetrahydrofolate binding.

It belongs to the Fmt family.

It catalyses the reaction L-methionyl-tRNA(fMet) + (6R)-10-formyltetrahydrofolate = N-formyl-L-methionyl-tRNA(fMet) + (6S)-5,6,7,8-tetrahydrofolate + H(+). Its function is as follows. Attaches a formyl group to the free amino group of methionyl-tRNA(fMet). The formyl group appears to play a dual role in the initiator identity of N-formylmethionyl-tRNA by promoting its recognition by IF2 and preventing the misappropriation of this tRNA by the elongation apparatus. The polypeptide is Methionyl-tRNA formyltransferase (Bartonella tribocorum (strain CIP 105476 / IBS 506)).